The chain runs to 557 residues: Syntaxin-binding protein 4 (557 aa).

Phosphoserine is present on residues Ser10 and Ser12. Residues 19–105 enclose the PDZ domain; that stretch reads AFRVITVTKE…RSESPWEIAF (87 aa). At Ser99 the chain carries Phosphoserine; by PKB/AKT2. The span at 142-154 shows a compositional bias: low complexity; it reads PSETLLPKTSSTP. The tract at residues 142–214 is disordered; the sequence is PSETLLPKTS…SGPQGKISLN (73 aa). The segment covering 179-194 has biased composition (polar residues); sequence SPITSLDNSPADTSNA. Ser216 carries the phosphoserine modification. Positions 298 to 408 form a coiled coil; that stretch reads ADEVGKLRQE…NKESVQDLRK (111 aa). Ser467 is subject to Phosphoserine. The region spanning 500 to 533 is the WW domain; that stretch reads DCLPYGWEEAYTADGIKYFINHVTQTTSWIHPVM.

As to quaternary structure, interacts with STX4A. Phosphorylated on Ser-99 by PKB/AKT2 after insulin treatment. Phosphorylation on Ser-99 abolishes the interaction with STX4A. Detected in skeletal muscle, heart, testis, adipocytes and pancreatic islet cells.

The protein localises to the cytoplasm. Plays a role in the translocation of transport vesicles from the cytoplasm to the plasma membrane. Inhibits the translocation of SLC2A4 from intracellular vesicles to the plasma membrane by STX4A binding and preventing the interaction between STX4A and VAMP2. Stimulation with insulin disrupts the interaction with STX4A, leading to increased levels of SLC2A4 at the plasma membrane. May also play a role in the regulation of insulin release by pancreatic beta cells after stimulation by glucose. This is Syntaxin-binding protein 4 (Stxbp4) from Mus musculus (Mouse).